Reading from the N-terminus, the 877-residue chain is Probable linoleate 9S-lipoxygenase 4 (877 aa).

In terms of domain architecture, PLAT spans 38–165 (GDFHASLLDG…NYQYERVFFA (128 aa)). The Lipoxygenase domain maps to 168 to 877 (TYLPSKMPAP…AMGIPNSISI (710 aa)). Positions 229 to 252 (GSQELPYPRRGRTGRAPTKTDPNT) are disordered. The Fe cation site is built by His-528, His-533, His-719, Asn-723, and Ile-877.

The protein belongs to the lipoxygenase family. Fe cation is required as a cofactor.

It carries out the reaction (9Z,12Z)-octadecadienoate + O2 = (9S)-hydroperoxy-(10E,12Z)-octadecadienoate. The protein operates within lipid metabolism; oxylipin biosynthesis. Functionally, plant lipoxygenase may be involved in a number of diverse aspects of plant physiology including growth and development, pest resistance, and senescence or responses to wounding. Catalyzes the hydroperoxidation of lipids containing a cis,cis-1,4-pentadiene structure. The chain is Probable linoleate 9S-lipoxygenase 4 from Oryza sativa subsp. japonica (Rice).